A 49-amino-acid polypeptide reads, in one-letter code: Large ribosomal subunit protein eL40 (49 aa).

This sequence belongs to the eukaryotic ribosomal protein eL40 family.

The chain is Large ribosomal subunit protein eL40 from Methanopyrus kandleri (strain AV19 / DSM 6324 / JCM 9639 / NBRC 100938).